A 146-amino-acid chain; its full sequence is MTLGARLVAPMIILLLFIPIELVKAEVITLTPETFSDKIKEKDTAWFVKFCVPWCKHCKKLGNLWEDLGKAMEGDDEIEVGEVDCGTSRAVCTKVEIHSYPTFMLFYNGEEVSKYKGKRDVESLKAFVVEETEKAAEKAQLEDKEL.

An N-terminal signal peptide occupies residues 1–25 (MTLGARLVAPMIILLLFIPIELVKA). Residues 26-133 (EVITLTPETF…LKAFVVEETE (108 aa)) enclose the Thioredoxin domain. Active-site nucleophile residues include Cys55 and Cys58. A disulfide bond links Cys55 and Cys58.

The protein belongs to the protein disulfide isomerase family.

Acts as a protein-folding catalyst that interacts with nascent polypeptides to catalyze the formation, isomerization, and reduction or oxidation of disulfide bonds. The polypeptide is Protein disulfide-isomerase 5-1 (PDIL5-1) (Arabidopsis thaliana (Mouse-ear cress)).